The following is a 124-amino-acid chain: Small ribosomal subunit protein bS6 (124 aa).

Residues 96–124 (ETGPSPMMKEVQREEAKKAAAAQPAEAQA) are disordered. A compositionally biased stretch (low complexity) spans 114–124 (AAAAQPAEAQA).

It belongs to the bacterial ribosomal protein bS6 family.

Its function is as follows. Binds together with bS18 to 16S ribosomal RNA. The protein is Small ribosomal subunit protein bS6 of Burkholderia orbicola (strain AU 1054).